The primary structure comprises 433 residues: Zinc finger and SCAN domain-containing protein 4 (433 aa).

The SCAN box domain maps to 44-126; the sequence is RMVLNSFQDS…RFMEDLTDDS (83 aa). 2 stretches are compositionally biased toward polar residues: residues 162-184 and 277-298; these read SAQTPREANMGTPSQTSQDTSLE and QPEQSSPESALTHQSNEGNSTC. 2 disordered regions span residues 162 to 199 and 272 to 298; these read SAQTPREANMGTPSQTSQDTSLETGEGCEDEQDGCNSS and AGCISQPEQSSPESALTHQSNEGNSTC. 4 C2H2-type zinc fingers span residues 312-334, 340-362, 368-390, and 396-418; these read YKCEECPKVFKYLCHLLAHQRRH, FVCPECQKGFFQISDLRVHQIIH, FTCSMCEKSFSHKTNLRSHERIH, and YTCPFCKTSYRQSSTYHRHMRTH. Residues 414-433 form a disordered region; the sequence is HMRTHEKITPPSVPSTPEAS.

It localises to the nucleus. The protein localises to the chromosome. The protein resides in the telomere. Functionally, embryonic stem (ES) cell-specific transcription factor required to regulate ES cell pluripotency. Binds telomeres and plays a key role in genomic stability in ES cells by regulating telomere elongation. Acts as an activator of spontaneous telomere sister chromatid exchange (T-SCE) and telomere elongation in undifferentiated ES cells. In Pongo pygmaeus (Bornean orangutan), this protein is Zinc finger and SCAN domain-containing protein 4 (ZSCAN4).